The chain runs to 709 residues: Dual specificity calcium/calmodulin-dependent 3',5'-cyclic nucleotide phosphodiesterase 1C (709 aa).

M1 bears the N-acetylmethionine mark. The interval 123–146 (EKPRFKSIVHAVQAGIFVERMYRR) is calmodulin-binding. The 378-residue stretch at 151-528 (VGLSYPPAVI…ERWRAKVPKE (378 aa)) folds into the PDEase domain. H228 acts as the Proton donor in catalysis. Zn(2+) contacts are provided by H232, H268, D269, and D376. A Mg(2+)-binding site is contributed by D269. Disordered regions lie at residues 453–495 (LIDE…APIN) and 523–650 (AKVP…TCRL). Over residues 483 to 495 (VKTSGSEGSAPIN) the composition is skewed to polar residues. The span at 523-556 (AKVPKEEKAKKEAEEKARLAAEEQQKEMEAKSQA) shows a compositional bias: basic and acidic residues. Polar residues predominate over residues 571 to 581 (ETKNQVNGTRA). Composition is skewed to basic and acidic residues over residues 582 to 598 (NKSDNPRGKNSKAEKSS) and 606 to 633 (DFKDGKNKTDKKDHSNIGNDSKKTDGTK).

It belongs to the cyclic nucleotide phosphodiesterase family. PDE1 subfamily. As to quaternary structure, homodimer. Zn(2+) is required as a cofactor. The cofactor is Mg(2+). In terms of tissue distribution, isoform PDE1C2 is present in the heart and brain and, at lower levels in the lung, liver, kidney and skeletal muscle. Isoform PDE1C1 is expressed in the heart and brain and, at lower levels in lung. Also expressed at low levels in uterus and testis.

It localises to the lysosome. It catalyses the reaction a nucleoside 3',5'-cyclic phosphate + H2O = a nucleoside 5'-phosphate + H(+). It carries out the reaction 3',5'-cyclic GMP + H2O = GMP + H(+). The enzyme catalyses 3',5'-cyclic AMP + H2O = AMP + H(+). With respect to regulation, type I PDE are activated by the binding of calmodulin in the presence of Ca(2+). In terms of biological role, calmodulin-dependent cyclic nucleotide phosphodiesterase with a dual specificity for the second messengers cAMP and cGMP, which are key regulators of many important physiological processes. Has a high affinity for both cAMP and cGMP. Modulates the amplitude and duration of the cAMP signal in sensory cilia in response to odorant stimulation, hence contributing to the generation of action potentials. Regulates smooth muscle cell proliferation. Regulates the stability of growth factor receptors, including PDGFRB. This chain is Dual specificity calcium/calmodulin-dependent 3',5'-cyclic nucleotide phosphodiesterase 1C, found in Homo sapiens (Human).